Here is a 469-residue protein sequence, read N- to C-terminus: 3-isopropylmalate dehydratase large subunit (469 aa).

[4Fe-4S] cluster contacts are provided by Cys346, Cys406, and Cys409.

The protein belongs to the aconitase/IPM isomerase family. LeuC type 1 subfamily. In terms of assembly, heterodimer of LeuC and LeuD. It depends on [4Fe-4S] cluster as a cofactor.

It catalyses the reaction (2R,3S)-3-isopropylmalate = (2S)-2-isopropylmalate. It functions in the pathway amino-acid biosynthesis; L-leucine biosynthesis; L-leucine from 3-methyl-2-oxobutanoate: step 2/4. In terms of biological role, catalyzes the isomerization between 2-isopropylmalate and 3-isopropylmalate, via the formation of 2-isopropylmaleate. In Lysinibacillus sphaericus (strain C3-41), this protein is 3-isopropylmalate dehydratase large subunit.